The primary structure comprises 427 residues: Extracellular superoxide dismutase [Cu-Zn] 2 (427 aa).

Residues 1-20 form the signal peptide; that stretch reads MNKLIISLLIVLSAISIISA. At 21–406 the chain is on the extracellular side; it reads DYQYGYCKFG…PTETSQPGTS (386 aa). N-linked (GlcNAc...) asparagine glycosylation is found at N38, N57, N81, N190, and N218. Cu cation contacts are provided by H257, H259, and H275. 2 residues coordinate Zn(2+): H275 and H283. N-linked (GlcNAc...) asparagine glycosylation occurs at N288. Residues H292 and D295 each coordinate Zn(2+). Position 331 (H331) interacts with Cu cation. The N-linked (GlcNAc...) asparagine glycan is linked to N376. A disordered region spans residues 381-404; sequence GESTIEPSPTPSTTPTPTETSQPG. Over residues 395–404 the composition is skewed to low complexity; the sequence is PTPTETSQPG. Residues 407–426 traverse the membrane as a helical segment; the sequence is SYLAPFFVLILSSLISVILI. A topological domain (cytoplasmic) is located at residue L427.

The protein belongs to the Cu-Zn superoxide dismutase family. It depends on Cu cation as a cofactor. Zn(2+) serves as cofactor.

The protein resides in the cell membrane. It carries out the reaction 2 superoxide + 2 H(+) = H2O2 + O2. Protect the extracellular space from toxic effect of reactive oxygen intermediates by converting superoxyde radicals into hydrogen peroxyde and oxygen. The chain is Extracellular superoxide dismutase [Cu-Zn] 2 (sodB) from Dictyostelium discoideum (Social amoeba).